Consider the following 239-residue polypeptide: Putative ankyrin repeat protein RBE_0489 (239 aa).

ANK repeat units lie at residues 23–52, 80–109, and 113–143; these read ISSR…SPNA, GIDT…FINA, and FGFT…SLTL.

The protein is Putative ankyrin repeat protein RBE_0489 of Rickettsia bellii (strain RML369-C).